A 379-amino-acid polypeptide reads, in one-letter code: Probable homogentisate phytyltransferase 2, chloroplastic (379 aa).

A disordered region spans residues M1–L39. The N-terminal 65 residues, M1–C65, are a transit peptide targeting the chloroplast. The next 8 helical transmembrane spans lie at W121 to V141, L174 to I194, T195 to L215, V220 to Y240, W252 to I272, I299 to F319, T328 to L348, and Y361 to L378.

It belongs to the UbiA prenyltransferase family.

Its subcellular location is the plastid. The protein localises to the chloroplast thylakoid membrane. It catalyses the reaction phytyl diphosphate + homogentisate + H(+) = 2-methyl-6-phytyl-1,4-benzene-1,4-diol + CO2 + diphosphate. The protein operates within cofactor biosynthesis; tocopherol biosynthesis. Its function is as follows. Involved in the synthesis of tocopherol (vitamin E). Catalyzes the condensation of homogentisate and phytyl diphosphate to form dimethylphytylhydrquinone. This chain is Probable homogentisate phytyltransferase 2, chloroplastic (HPT2), found in Oryza sativa subsp. japonica (Rice).